The following is a 360-amino-acid chain: UDP-N-acetylglucosamine--N-acetylmuramyl-(pentapeptide) pyrophosphoryl-undecaprenol N-acetylglucosamine transferase (360 aa).

UDP-N-acetyl-alpha-D-glucosamine-binding positions include Thr-15–Gly-17, Asn-128, Arg-164, Ser-192, Ile-247, and Gln-292.

This sequence belongs to the glycosyltransferase 28 family. MurG subfamily.

It localises to the cell inner membrane. The enzyme catalyses di-trans,octa-cis-undecaprenyl diphospho-N-acetyl-alpha-D-muramoyl-L-alanyl-D-glutamyl-meso-2,6-diaminopimeloyl-D-alanyl-D-alanine + UDP-N-acetyl-alpha-D-glucosamine = di-trans,octa-cis-undecaprenyl diphospho-[N-acetyl-alpha-D-glucosaminyl-(1-&gt;4)]-N-acetyl-alpha-D-muramoyl-L-alanyl-D-glutamyl-meso-2,6-diaminopimeloyl-D-alanyl-D-alanine + UDP + H(+). The protein operates within cell wall biogenesis; peptidoglycan biosynthesis. In terms of biological role, cell wall formation. Catalyzes the transfer of a GlcNAc subunit on undecaprenyl-pyrophosphoryl-MurNAc-pentapeptide (lipid intermediate I) to form undecaprenyl-pyrophosphoryl-MurNAc-(pentapeptide)GlcNAc (lipid intermediate II). The sequence is that of UDP-N-acetylglucosamine--N-acetylmuramyl-(pentapeptide) pyrophosphoryl-undecaprenol N-acetylglucosamine transferase from Blochmanniella floridana.